Reading from the N-terminus, the 103-residue chain is Large ribosomal subunit protein uL24 (103 aa).

This sequence belongs to the universal ribosomal protein uL24 family. Part of the 50S ribosomal subunit.

Its function is as follows. One of two assembly initiator proteins, it binds directly to the 5'-end of the 23S rRNA, where it nucleates assembly of the 50S subunit. In terms of biological role, one of the proteins that surrounds the polypeptide exit tunnel on the outside of the subunit. The chain is Large ribosomal subunit protein uL24 from Brucella ovis (strain ATCC 25840 / 63/290 / NCTC 10512).